We begin with the raw amino-acid sequence, 119 residues long: Large ribosomal subunit protein uL18 (119 aa).

The segment at 54 to 76 (LTSASTLADDVEGETPTEESRSV) is disordered.

Belongs to the universal ribosomal protein uL18 family. Part of the 50S ribosomal subunit; part of the 5S rRNA/L5/L18/L25 subcomplex. Contacts the 5S and 23S rRNAs.

Functionally, this is one of the proteins that bind and probably mediate the attachment of the 5S RNA into the large ribosomal subunit, where it forms part of the central protuberance. This chain is Large ribosomal subunit protein uL18, found in Salinibacter ruber (strain DSM 13855 / M31).